Here is a 520-residue protein sequence, read N- to C-terminus: Nonsense-mediated mRNA decay factor SMG9 (520 aa).

The segment at 1–143 (MSESGHSQPG…KGEKEGQRPT (143 aa)) is disordered. Residue serine 2 is modified to N-acetylserine. Phosphoserine occurs at positions 2, 4, 7, 32, and 53. Positions 36–53 (GRERDYIAPWERERRDGS) are enriched in basic and acidic residues. The segment covering 78–94 (QPPPPAAPAAPPAPAPL) has biased composition (pro residues). Positions 109 to 121 (GPAATTSTSTPEG) are enriched in low complexity. Residues 122–133 (TAPPPPAAPVPP) are compositionally biased toward pro residues. Residue serine 451 is modified to Phosphoserine.

It belongs to the SMG9 family. In terms of assembly, self-associates to form homodimers and forms heterodimers with SMG8; these assembly forms may represent SMG1C intermediate forms. Component of the SMG1C complex composed of SMG1, SMG8 and SMG9. Self-associates to form homodimers and forms heterodimers with SMG8; these assembly forms may represent SMG1C intermediate forms. Interacts with DHX34; the interaction is RNA-independent. In terms of processing, phosphorylated by SMG1.

Its function is as follows. Involved in nonsense-mediated decay (NMD) of mRNAs containing premature stop codons. Is recruited by release factors to stalled ribosomes together with SMG1 and SMG8 (forming the SMG1C protein kinase complex) and, in the SMG1C complex, is required for the efficient association between SMG1 and SMG8. Plays a role in brain, heart, and eye development. This Bos taurus (Bovine) protein is Nonsense-mediated mRNA decay factor SMG9.